Reading from the N-terminus, the 447-residue chain is Probable 7-dehydrocholesterol reductase (447 aa).

The next 8 membrane-spanning stretches (helical) occupy residues 24 to 44 (LTTAAMFMFCPFIILVFYLIT), 71 to 91 (IPSFKINVLGACLLWIVFQLI), 102 to 124 (FVPHYVGGIKAGHITPAGNLVYY), 133 to 153 (IITHVLVIMSCYYGLFSPTII), 157 to 177 (WGSIFWSVNIIGYLITFLAYF), 244 to 264 (YVSNSMILVIILQLIYIVDFF), 281 to 301 (FGWMLAWGDTVWLPFGYTLQA), and 309 to 329 (IDLSTGFFNLVFVMGIIGYII). NADP(+) contacts are provided by residues K337, R341, I367, W372, and 379–380 (NY). The helical transmembrane segment at 393 to 413 (ACGFSHFIPYFYCVYMTILLV) threads the bilayer. Residues D419, 423-427 (CSRKY), and Y434 each bind NADP(+).

This sequence belongs to the ERG4/ERG24 family.

The protein resides in the membrane. The catalysed reaction is cholesterol + NADP(+) = 7-dehydrocholesterol + NADPH + H(+). Its pathway is steroid biosynthesis; cholesterol biosynthesis. In terms of biological role, catalyzes the last step of the cholesterol synthesis pathway, which transforms cholesta-5,7-dien-3beta-ol (7-dehydrocholesterol,7-DHC) into cholesterol by reducing the C7-C8 double bond of its sterol core. This is Probable 7-dehydrocholesterol reductase (DHCR7) from Acanthamoeba polyphaga (Amoeba).